A 229-amino-acid chain; its full sequence is Demethylmenaquinone methyltransferase (229 aa).

S-adenosyl-L-methionine-binding positions include Thr57, Asp77, and 101–102 (DV).

The protein belongs to the class I-like SAM-binding methyltransferase superfamily. MenG/UbiE family.

The enzyme catalyses a 2-demethylmenaquinol + S-adenosyl-L-methionine = a menaquinol + S-adenosyl-L-homocysteine + H(+). It participates in quinol/quinone metabolism; menaquinone biosynthesis; menaquinol from 1,4-dihydroxy-2-naphthoate: step 2/2. Its function is as follows. Methyltransferase required for the conversion of demethylmenaquinol (DMKH2) to menaquinol (MKH2). The protein is Demethylmenaquinone methyltransferase of Chlamydia trachomatis serovar L2 (strain ATCC VR-902B / DSM 19102 / 434/Bu).